We begin with the raw amino-acid sequence, 426 residues long: Putative phosphate permease CT_962 (426 aa).

The next 11 membrane-spanning stretches (helical) occupy residues Met-1 to Ala-21, Leu-37 to Leu-57, Val-83 to Cys-103, Gly-104 to Leu-124, Val-140 to Ile-160, Ala-183 to Ile-203, Pro-207 to Ile-227, Leu-260 to Ala-280, Val-309 to Gly-329, Leu-365 to Ala-385, and Ile-399 to Leu-419.

The protein belongs to the inorganic phosphate transporter (PiT) (TC 2.A.20) family.

It is found in the cell membrane. Functionally, potential transporter for phosphate. This Chlamydia trachomatis serovar D (strain ATCC VR-885 / DSM 19411 / UW-3/Cx) protein is Putative phosphate permease CT_962.